The primary structure comprises 336 residues: Vacuolar protein sorting-associated protein 26B (336 aa).

Phosphoserine occurs at positions 302, 304, and 319.

This sequence belongs to the VPS26 family. Component of the heterotrimeric retromer cargo-selective complex (CSC), also described as vacuolar protein sorting subcomplex (VPS), formed by VPS26 (VPS26A or VPS26B), VPS29 and VPS35. The CSC has a highly elongated structure with VPS26 and VPS29 binding independently at opposite distal ends of VPS35 as central platform. The CSC is believed to associate with variable sorting nexins to form functionally distinct retromer complex variants. The originally described SNX-BAR retromer is a pentamer containing the CSC and a heterodimeric membrane-deforming subcomplex formed between SNX1 or SNX2 and SNX5 or SNX6 (also called SNX-BAR subcomplex); the respective CSC and SNX-BAR subcomplexes associate with low affinity. The CSC associates with SNX3 to form a SNX3-retromer complex. The CSC associates with SNX27, the WASH complex and the SNX-BAR subcomplex to form the SNX27-retromer complex. Interacts with VPS29, VPS35, TBC1D5, GOLPH3, SNX27.

Its subcellular location is the cytoplasm. The protein resides in the membrane. It localises to the early endosome. The protein localises to the late endosome. Its function is as follows. Acts as a component of the retromer cargo-selective complex (CSC). The CSC is believed to be the core functional component of retromer or respective retromer complex variants acting to prevent missorting of selected transmembrane cargo proteins into the lysosomal degradation pathway. The recruitment of the CSC to the endosomal membrane involves RAB7A and SNX3. The SNX-BAR retromer mediates retrograde transport of cargo proteins from endosomes to the trans-Golgi network (TGN) and is involved in endosome-to-plasma membrane transport for cargo protein recycling. The SNX3-retromer mediates the retrograde transport of WLS distinct from the SNX-BAR retromer pathway. The SNX27-retromer is believed to be involved in endosome-to-plasma membrane trafficking and recycling of a broad spectrum of cargo proteins. The CSC seems to act as recruitment hub for other proteins, such as the WASH complex and TBC1D5. May be involved in retrograde transport of SORT1 but not of IGF2R. Acts redundantly with VSP26A in SNX-27 mediated endocytic recycling of SLC2A1/GLUT1. The sequence is that of Vacuolar protein sorting-associated protein 26B (VPS26B) from Pongo abelii (Sumatran orangutan).